A 202-amino-acid polypeptide reads, in one-letter code: LexA repressor (202 aa).

The H-T-H motif DNA-binding region spans 29–49; that stretch reads VREICTAVGLKSTSTVHSYLE. Catalysis depends on for autocatalytic cleavage activity residues Ser125 and Lys162.

Belongs to the peptidase S24 family. In terms of assembly, homodimer.

The enzyme catalyses Hydrolysis of Ala-|-Gly bond in repressor LexA.. In terms of biological role, represses a number of genes involved in the response to DNA damage (SOS response), including recA and lexA. In the presence of single-stranded DNA, RecA interacts with LexA causing an autocatalytic cleavage which disrupts the DNA-binding part of LexA, leading to derepression of the SOS regulon and eventually DNA repair. This Clostridium kluyveri (strain NBRC 12016) protein is LexA repressor.